The primary structure comprises 525 residues: GMP synthase [glutamine-hydrolyzing] (525 aa).

The Glutamine amidotransferase type-1 domain occupies 8–207 (KILILDFGSQ…ALDICGCAAN (200 aa)). Cys-85 functions as the Nucleophile in the catalytic mechanism. Residues His-181 and Glu-183 contribute to the active site. A GMPS ATP-PPase domain is found at 208 to 400 (WKPSSIIEDA…LGLPYNMLYR (193 aa)). 235 to 241 (SGGVDSS) contributes to the ATP binding site.

Homodimer.

It carries out the reaction XMP + L-glutamine + ATP + H2O = GMP + L-glutamate + AMP + diphosphate + 2 H(+). It participates in purine metabolism; GMP biosynthesis; GMP from XMP (L-Gln route): step 1/1. Catalyzes the synthesis of GMP from XMP. The chain is GMP synthase [glutamine-hydrolyzing] from Shewanella sp. (strain ANA-3).